Here is a 215-residue protein sequence, read N- to C-terminus: 7-methyl-GTP pyrophosphatase (215 aa).

The active-site Proton acceptor is aspartate 79.

This sequence belongs to the Maf family. YceF subfamily. A divalent metal cation is required as a cofactor.

It is found in the cytoplasm. It carries out the reaction N(7)-methyl-GTP + H2O = N(7)-methyl-GMP + diphosphate + H(+). In terms of biological role, nucleoside triphosphate pyrophosphatase that hydrolyzes 7-methyl-GTP (m(7)GTP). May have a dual role in cell division arrest and in preventing the incorporation of modified nucleotides into cellular nucleic acids. This Burkholderia mallei (strain ATCC 23344) protein is 7-methyl-GTP pyrophosphatase.